Here is a 627-residue protein sequence, read N- to C-terminus: Protein fem-1 homolog B (627 aa).

ANK repeat units follow at residues 45 to 74, 87 to 116, 120 to 149, and 153 to 182; these read QRST…VQTQ, DGAT…NVNH, TNST…NISI, and YDNT…DPNA. The Zn(2+) site is built by histidine 185, cysteine 186, and histidine 218. ANK repeat units follow at residues 186–215 and 218–248; these read CGAT…AIVV and HGMT…DRRS. Residues 344-377 form a TPR repeat; that stretch reads SHPIIYRGAVYADNMEFEQCIKLWLHALHLRQKG. ANK repeat units lie at residues 483–527 and 531–568; these read EGFT…EVNA and EGNS…HTDM.

Belongs to the fem-1 family. As to quaternary structure, component of a CRL2 E3 ubiquitin-protein ligase complex, also named ECS (Elongin BC-CUL2/5-SOCS-box protein) complex, composed of CUL2, Elongin BC (ELOB and ELOC), RBX1 and substrate-specific adapter FEM1B. Homooligomer. Interacts with PPM1F and PHTF1. Interacts with the death domain of FAS/TNFRSF6 and TNFRSF1A. Interacts with CHEK1. Interacts with NKX3-1. As to expression, present in adult testis (at protein level).

It is found in the cytoplasm. It localises to the nucleus. It functions in the pathway protein modification; protein ubiquitination. Activity of the CRL2(FEM1B) complex toward FNIP1 is inhibited by BEX family proteins (BEX1, BEX2, BEX3 and/or BEX4) in absence of reductive stress. Mechanistically, BEX proteins act as pseudosubstrate inhibitors that associate with FEM1B via zinc in absence of reductive stress, thereby preventing association between FEM1B and FNIP1. In terms of biological role, substrate-recognition component of a Cul2-RING (CRL2) E3 ubiquitin-protein ligase complex of the DesCEND (destruction via C-end degrons) pathway, which recognizes a C-degron located at the extreme C terminus of target proteins, leading to their ubiquitination and degradation. The C-degron recognized by the DesCEND pathway is usually a motif of less than ten residues and can be present in full-length proteins, truncated proteins or proteolytically cleaved forms. The CRL2(FEM1B) complex specifically recognizes proteins ending with -Gly-Leu-Asp-Arg, such as CDK5R1, leading to their ubiquitination and degradation. Also acts as a regulator of the reductive stress response by mediating ubiquitination of reduced FNIP1: in response to reductive stress, the CRL2(FEM1B) complex specifically recognizes a conserved Cys degron in FNIP1 when this degron is reduced, leading to FNIP1 degradation and subsequent activation of mitochondria to recalibrate reactive oxygen species (ROS). Mechanistically, recognizes and binds reduced FNIP1 through two interface zinc ions, which act as a molecular glue that recruit reduced FNIP1 to FEM1B. Promotes ubiquitination of GLI1, suppressing GLI1 transcriptional activator activity. Promotes ubiquitination and degradation of ANKRD37. Promotes ubiquitination and degradation of SLBP. Involved in apoptosis by acting as a death receptor-associated protein that mediates apoptosis. Also involved in glucose homeostasis in pancreatic islet. May also act as an adapter/mediator in replication stress-induced signaling that leads to the activation of CHEK1. This is Protein fem-1 homolog B from Rattus norvegicus (Rat).